Consider the following 92-residue polypeptide: Cell division protein FtsB (92 aa).

Over 1-3 the chain is Cytoplasmic; it reads MRL. Residues 4 to 21 form a helical membrane-spanning segment; the sequence is LILILLSVLVLFQHDFWF. Residues 22–92 are Periplasmic-facing; that stretch reads GSNGFLDYRQ…VFYHIVKESK (71 aa). A coiled-coil region spans residues 28 to 63; it reads DYRQNAEKIKENQAENEKLSQRNQRINAEIQGLTKG.

It belongs to the FtsB family. In terms of assembly, part of a complex composed of FtsB, FtsL and FtsQ.

It is found in the cell inner membrane. Its function is as follows. Essential cell division protein. May link together the upstream cell division proteins, which are predominantly cytoplasmic, with the downstream cell division proteins, which are predominantly periplasmic. In Haemophilus influenzae (strain PittEE), this protein is Cell division protein FtsB.